The primary structure comprises 670 residues: DNA ligase (670 aa).

Residues 32–36 (DAEYD), 81–82 (SL), and glutamate 113 contribute to the NAD(+) site. The active-site N6-AMP-lysine intermediate is lysine 115. NAD(+)-binding residues include arginine 136, glutamate 173, lysine 290, and lysine 314. Residues cysteine 406, cysteine 409, cysteine 424, and cysteine 430 each contribute to the Zn(2+) site. The region spanning 592 to 670 (EIDSPFAGKT…EQEMMRLLGE (79 aa)) is the BRCT domain.

The protein belongs to the NAD-dependent DNA ligase family. LigA subfamily. Mg(2+) is required as a cofactor. It depends on Mn(2+) as a cofactor.

It carries out the reaction NAD(+) + (deoxyribonucleotide)n-3'-hydroxyl + 5'-phospho-(deoxyribonucleotide)m = (deoxyribonucleotide)n+m + AMP + beta-nicotinamide D-nucleotide.. In terms of biological role, DNA ligase that catalyzes the formation of phosphodiester linkages between 5'-phosphoryl and 3'-hydroxyl groups in double-stranded DNA using NAD as a coenzyme and as the energy source for the reaction. It is essential for DNA replication and repair of damaged DNA. This chain is DNA ligase, found in Erwinia tasmaniensis (strain DSM 17950 / CFBP 7177 / CIP 109463 / NCPPB 4357 / Et1/99).